We begin with the raw amino-acid sequence, 85 residues long: Small ribosomal subunit protein uS17 (85 aa).

This sequence belongs to the universal ribosomal protein uS17 family. Part of the 30S ribosomal subunit.

In terms of biological role, one of the primary rRNA binding proteins, it binds specifically to the 5'-end of 16S ribosomal RNA. The chain is Small ribosomal subunit protein uS17 from Acetivibrio thermocellus (strain ATCC 27405 / DSM 1237 / JCM 9322 / NBRC 103400 / NCIMB 10682 / NRRL B-4536 / VPI 7372) (Clostridium thermocellum).